A 448-amino-acid polypeptide reads, in one-letter code: Alpha-2B adrenergic receptor (448 aa).

Residues 1–12 (MDHQEPYSVQAT) lie on the Extracellular side of the membrane. A helical transmembrane segment spans residues 13-38 (AAIAAVITFLILFTIFGNALVILAVL). At 39 to 49 (TSRSLPAPQNL) the chain is on the cytoplasmic side. The helical transmembrane segment at 50-75 (FLVSLAAADILVATLIIPFSLANELL) threads the bilayer. At 76–85 (GYWYFWRTWC) the chain is on the extracellular side. C85 and C163 form a disulfide bridge. Residues 86-108 (EVYLALDVLFCTSSIVHLCAISL) form a helical membrane-spanning segment. The Cytoplasmic portion of the chain corresponds to 109–130 (DRYWAVSRALEYNSKRTPRRIK). Residues 131–153 (CIILTVWLIAAVISLPPLIYKGD) traverse the membrane as a helical segment. At 154–168 (QGPSPRGPQCKINQE) the chain is on the extracellular side. A helical transmembrane segment spans residues 169–192 (AWYILASSIGSFFAPCLIMILVYL). The Cytoplasmic segment spans residues 193-370 (RIYLIAKRSH…MTREKRFTFV (178 aa)). The tract at residues 203 to 326 (RRGPRAKGGP…PASMCSPSLQ (124 aa)) is disordered. The span at 293 to 309 (AEEEAEEEEEEEGDECE) shows a compositional bias: acidic residues. Residues 371-394 (LAVVIGVFVLCWFPFFFTYSLGAI) form a helical membrane-spanning segment. At 395-403 (CPQHCKVPH) the chain is on the extracellular side. A helical membrane pass occupies residues 404-427 (GLFQFFFWIGYCNSSLNPVIYTIF). Residues 428–448 (NQDFRRAFRRILCRQWTQTAW) lie on the Cytoplasmic side of the membrane. C440 carries the S-palmitoyl cysteine lipid modification.

It belongs to the G-protein coupled receptor 1 family. Adrenergic receptor subfamily. ADRA2B sub-subfamily. In terms of assembly, interacts with RAB26. Interacts with PPP1R9B.

The protein resides in the cell membrane. Its function is as follows. Alpha-2 adrenergic receptors mediate the catecholamine-induced inhibition of adenylate cyclase through the action of G proteins. The sequence is that of Alpha-2B adrenergic receptor (ADRA2B) from Cavia porcellus (Guinea pig).